The sequence spans 141 residues: Large ribosomal subunit protein uL11 (141 aa).

Belongs to the universal ribosomal protein uL11 family. In terms of assembly, part of the ribosomal stalk of the 50S ribosomal subunit. Interacts with L10 and the large rRNA to form the base of the stalk. L10 forms an elongated spine to which L12 dimers bind in a sequential fashion forming a multimeric L10(L12)X complex. Post-translationally, one or more lysine residues are methylated.

In terms of biological role, forms part of the ribosomal stalk which helps the ribosome interact with GTP-bound translation factors. This chain is Large ribosomal subunit protein uL11, found in Lactobacillus delbrueckii subsp. bulgaricus (strain ATCC 11842 / DSM 20081 / BCRC 10696 / JCM 1002 / NBRC 13953 / NCIMB 11778 / NCTC 12712 / WDCM 00102 / Lb 14).